The primary structure comprises 183 residues: Protein Syd (183 aa).

The protein belongs to the Syd family.

It localises to the cell inner membrane. Functionally, interacts with the SecY protein in vivo. May bind preferentially to an uncomplexed state of SecY, thus functioning either as a chelating agent for excess SecY in the cell or as a regulatory factor that negatively controls the translocase function. This is Protein Syd from Yersinia pseudotuberculosis serotype O:1b (strain IP 31758).